A 232-amino-acid chain; its full sequence is Orotate phosphoribosyltransferase (232 aa).

5-phospho-alpha-D-ribose 1-diphosphate-binding positions include Arg-107, Lys-108, Lys-111, and 133–141; that span reads EDLTTDGGS. Thr-137 is an orotate binding site.

The protein belongs to the purine/pyrimidine phosphoribosyltransferase family. PyrE subfamily. In terms of assembly, homodimer. Mg(2+) is required as a cofactor.

The catalysed reaction is orotidine 5'-phosphate + diphosphate = orotate + 5-phospho-alpha-D-ribose 1-diphosphate. It participates in pyrimidine metabolism; UMP biosynthesis via de novo pathway; UMP from orotate: step 1/2. Catalyzes the transfer of a ribosyl phosphate group from 5-phosphoribose 1-diphosphate to orotate, leading to the formation of orotidine monophosphate (OMP). This chain is Orotate phosphoribosyltransferase, found in Cereibacter sphaeroides (strain KD131 / KCTC 12085) (Rhodobacter sphaeroides).